The following is a 220-amino-acid chain: MGSKLSKKKKGYNVNDEKAKDKDKKAEGAGTEEEGTQKESEPQAAADATEVKESAEEKPKDAADGEAKAEEKEADKAAAKEEAPKAEPEKSEGAAEEQPEPAPAPEQEAAAPGPAAGGEAPKAGEASAESTGAADGAPQEEGEAKKTEAPAAGPEAKSDAAPAASDSKPSTEPAPSSKETPAASEAPSSAAKAPAPAAPAAEPQAEAPVASSEQSVAVKE.

Residues 1–11 (MGSKLSKKKKG) show a composition bias toward basic residues. The disordered stretch occupies residues 1–220 (MGSKLSKKKK…SSEQSVAVKE (220 aa)). The N-myristoyl glycine moiety is linked to residue Gly-2. The span at 15–27 (NDEKAKDKDKKAE) shows a compositional bias: basic and acidic residues. A Glycyl lysine isopeptide (Lys-Gly) (interchain with G-Cter in SUMO2) cross-link involves residue Lys-25. Phosphothreonine is present on residues Thr-31 and Thr-36. Ser-40 bears the Phosphoserine mark. A compositionally biased stretch (basic and acidic residues) spans 49–93 (TEVKESAEEKPKDAADGEAKAEEKEADKAAAKEEAPKAEPEKSEG). Lys-85 participates in a covalent cross-link: Glycyl lysine isopeptide (Lys-Gly) (interchain with G-Cter in SUMO2). 3 positions are modified to phosphoserine: Ser-91, Ser-127, and Ser-130. Low complexity-rich tracts occupy residues 105-137 (PEQE…ADGA) and 149-213 (APAA…ASSE). Residue Lys-157 forms a Glycyl lysine isopeptide (Lys-Gly) (interchain with G-Cter in SUMO2) linkage. Ser-158, Ser-165, Ser-167, Ser-170, Ser-189, and Ser-212 each carry phosphoserine.

This sequence belongs to the BASP1 family. As to expression, brain.

The protein localises to the cell membrane. The protein resides in the cell projection. It is found in the growth cone. The protein is Brain acid soluble protein 1 (Basp1) of Rattus norvegicus (Rat).